Here is a 234-residue protein sequence, read N- to C-terminus: Octanoyltransferase (234 aa).

Residues 43–231 (IPTRNYFLFV…HFQELFQAEL (189 aa)) enclose the BPL/LPL catalytic domain. Substrate is bound by residues 88–95 (RGGDITYH), 160–162 (AMG), and 173–175 (GFA). Residue cysteine 191 is the Acyl-thioester intermediate of the active site.

It belongs to the LipB family.

The protein resides in the cytoplasm. It catalyses the reaction octanoyl-[ACP] + L-lysyl-[protein] = N(6)-octanoyl-L-lysyl-[protein] + holo-[ACP] + H(+). It participates in protein modification; protein lipoylation via endogenous pathway; protein N(6)-(lipoyl)lysine from octanoyl-[acyl-carrier-protein]: step 1/2. Functionally, catalyzes the transfer of endogenously produced octanoic acid from octanoyl-acyl-carrier-protein onto the lipoyl domains of lipoate-dependent enzymes. Lipoyl-ACP can also act as a substrate although octanoyl-ACP is likely to be the physiological substrate. This chain is Octanoyltransferase, found in Christiangramia forsetii (strain DSM 17595 / CGMCC 1.15422 / KT0803) (Gramella forsetii).